We begin with the raw amino-acid sequence, 450 residues long: Phosphoglucosamine mutase (450 aa).

Serine 103 functions as the Phosphoserine intermediate in the catalytic mechanism. Serine 103, aspartate 243, aspartate 245, and aspartate 247 together coordinate Mg(2+). Residue serine 103 is modified to Phosphoserine.

This sequence belongs to the phosphohexose mutase family. Mg(2+) is required as a cofactor. Activated by phosphorylation.

The enzyme catalyses alpha-D-glucosamine 1-phosphate = D-glucosamine 6-phosphate. Its function is as follows. Catalyzes the conversion of glucosamine-6-phosphate to glucosamine-1-phosphate. The protein is Phosphoglucosamine mutase of Lactobacillus helveticus (strain DPC 4571).